The primary structure comprises 126 residues: RutC family protein PH0854 (126 aa).

It belongs to the RutC family.

The polypeptide is RutC family protein PH0854 (Pyrococcus horikoshii (strain ATCC 700860 / DSM 12428 / JCM 9974 / NBRC 100139 / OT-3)).